A 128-amino-acid polypeptide reads, in one-letter code: U24-ctenitoxin-Pn1a (128 aa).

Thyroglobulin type-1 domains are found at residues 4–67 (KSDC…ECGC) and 72–127 (KERK…SLKC). Cystine bridges form between cysteine 7/cysteine 27, cysteine 38/cysteine 45, cysteine 47/cysteine 67, and cysteine 107/cysteine 127.

In terms of tissue distribution, expressed by the venom gland.

The protein resides in the secreted. Cysteine proteinase inhibitor. This chain is U24-ctenitoxin-Pn1a, found in Phoneutria nigriventer (Brazilian armed spider).